The primary structure comprises 110 residues: Large ribosomal subunit protein uL22 (110 aa).

This sequence belongs to the universal ribosomal protein uL22 family. Part of the 50S ribosomal subunit.

This protein binds specifically to 23S rRNA; its binding is stimulated by other ribosomal proteins, e.g. L4, L17, and L20. It is important during the early stages of 50S assembly. It makes multiple contacts with different domains of the 23S rRNA in the assembled 50S subunit and ribosome. Functionally, the globular domain of the protein is located near the polypeptide exit tunnel on the outside of the subunit, while an extended beta-hairpin is found that lines the wall of the exit tunnel in the center of the 70S ribosome. This chain is Large ribosomal subunit protein uL22, found in Nitrosomonas europaea (strain ATCC 19718 / CIP 103999 / KCTC 2705 / NBRC 14298).